Consider the following 2298-residue polypeptide: Non-reducing polyketide synthase pgmA (2298 aa).

Residues 8–333 (LFIFGDQTLD…IYNVLKQSPL (326 aa)) form an N-terminal acylcarrier protein transacylase domain (SAT) region. Residues 336-361 (YLSSKPAQSRQPVSNEGAPEPGNGRQ) form a disordered region. Polar residues predominate over residues 340-349 (KPAQSRQPVS). The Ketosynthase family 3 (KS3) domain maps to 360-798 (RQKLAIIGMS…GGNSALLVED (439 aa)). Residues Cys532, His667, and His714 each act as for beta-ketoacyl synthase activity in the active site. The acyl/malonyl transferases stretch occupies residues 901-1193 (VFAFTGQGAH…GMVKGVLGPQ (293 aa)). Catalysis depends on Ser994, which acts as the For acyl/malonyl transferase activity. Positions 1283–1415 (HRVVEETHDS…CVVRFRDRGL (133 aa)) are N-terminal hotdog fold. The PKS/mFAS DH domain occupies 1283–1589 (HRVVEETHDS…IQGVPRRVLK (307 aa)). Residues 1294–1586 (KTRIVIEADI…QISIQGVPRR (293 aa)) form a product template (PT) domainn region. His1315 serves as the catalytic Proton acceptor; for dehydratase activity. A C-terminal hotdog fold region spans residues 1438–1589 (VTGETARFNR…IQGVPRRVLK (152 aa)). The Proton donor; for dehydratase activity role is filled by Asp1502. The disordered stretch occupies residues 1619–1642 (YPVANGHAQATPTSGPVNGEPRPS). Residues 1641–1716 (PSRFPRALEI…SLRALLSEPE (76 aa)) enclose the Carrier 1 domain. The residue at position 1675 (Ser1675) is an O-(pantetheine 4'-phosphoryl)serine. The disordered stretch occupies residues 1716 to 1762 (ERSTNGMPAASAKDTSRFDEIPPMNGHKTNGHVMNGHSNGSSNGLPD). Residues 1751 to 1760 (GHSNGSSNGL) are compositionally biased toward polar residues. The Carrier 2 domain maps to 1765–1840 (KVDFQRVLQI…DLKRYLFPQD (76 aa)). Ser1799 bears the O-(pantetheine 4'-phosphoryl)serine mark. The segment at 1927 to 2178 (VTGASGSLGG…YWTPVEEVAG (252 aa)) is reductase (R) domain.

It participates in pigment biosynthesis. Its pathway is secondary metabolite biosynthesis. Non-reducing polyketide synthase; part of the gene cluster that mediates the biosynthesis of pleosporalin A, ascomycone A, as well as a third cryptic naphthoquinone derived pigment, all responsible for the coloration of conidia. The non-reducing polyketide synthase pgmA is responsible for the condensation of seven acetyl-CoA units to produce the cyclized heptaketide 3-acetonyl-1,6,8-trihydroxy-2-naphthaldehyde. The pathway begins with the biosynthesis of the cyclized heptaketide 3-acetonyl-1,6,8-trihydroxy-2-naphthaldehyde by the NR-PKS pgmA. The C-6 hydroxyl group is further methylated by the O-methyltransferase pgmB to yield fusarubinaldehyde which is in turn oxidized by the cytochrome P450 monooxygenase pgmC at C-9. The C-1 hydroxyl group is then methylated spontaneously. Although pgmE, pgmD and pgmH are essential for the production of pleosporalin A, it is not the case for the 2 other final products and it remains difficult to assign a specific function to each enzyme. PgmF and pgmG seem not to be involved in pigment biosynthesis although they were regulated by the cluster-specific transcription factor pgmR. In Aspergillus terreus (strain NIH 2624 / FGSC A1156), this protein is Non-reducing polyketide synthase pgmA.